The sequence spans 314 residues: Ficolin-2 (314 aa).

The signal sequence occupies residues 1 to 17 (MALGSAALFVLTLTVHA). Positions 40-96 (GCPGLPGAAGPKGEAGAKGDRGESGLPGIPGKEGPTGPKGNQGEKGIRGEKGDSGPS) constitute a Collagen-like domain. The tract at residues 49-101 (GPKGEAGAKGDRGESGLPGIPGKEGPTGPKGNQGEKGIRGEKGDSGPSQSCAT) is disordered. The Fibrinogen C-terminal domain maps to 97 to 314 (QSCATGPRTC…KVSEMKVRLI (218 aa)). 2 disulfide bridges follow: cysteine 99–cysteine 127 and cysteine 106–cysteine 134. Positions 250, 252, 254, and 256 each coordinate Ca(2+). Cysteine 258 and cysteine 271 are oxidised to a cystine. A glycan (N-linked (GlcNAc...) asparagine) is linked at asparagine 301.

This sequence belongs to the ficolin lectin family. Homotrimer. Interacts with elastin. Interacts with MASP1 and MASP2.

The protein localises to the secreted. In terms of biological role, may function in innate immunity through activation of the lectin complement pathway. Calcium-dependent and GlcNAc-binding lectin. The polypeptide is Ficolin-2 (Fcn2) (Mus musculus (Mouse)).